A 427-amino-acid polypeptide reads, in one-letter code: Enolase (427 aa).

Q163 contributes to the (2R)-2-phosphoglycerate binding site. Catalysis depends on E205, which acts as the Proton donor. Mg(2+) is bound by residues D242, E285, and D312. 4 residues coordinate (2R)-2-phosphoglycerate: K337, R366, S367, and K388. Catalysis depends on K337, which acts as the Proton acceptor.

The protein belongs to the enolase family. Requires Mg(2+) as cofactor.

The protein resides in the cytoplasm. Its subcellular location is the secreted. It localises to the cell surface. The catalysed reaction is (2R)-2-phosphoglycerate = phosphoenolpyruvate + H2O. Its pathway is carbohydrate degradation; glycolysis; pyruvate from D-glyceraldehyde 3-phosphate: step 4/5. Its function is as follows. Catalyzes the reversible conversion of 2-phosphoglycerate (2-PG) into phosphoenolpyruvate (PEP). It is essential for the degradation of carbohydrates via glycolysis. The sequence is that of Enolase from Janthinobacterium sp. (strain Marseille) (Minibacterium massiliensis).